Consider the following 462-residue polypeptide: Chromosomal replication initiator protein DnaA (462 aa).

The tract at residues 1–84 (MAVSLWQQCI…RFDIGSRPSA (84 aa)) is domain I, interacts with DnaA modulators. Residues 84–125 (AKKPSVPAPIAPTRVANTQTKATVGTTFNVQAEPMANANHRS) are domain II. The segment at 126–342 (NINPSYQFDN…GALNRVIANA (217 aa)) is domain III, AAA+ region. ATP-binding residues include G170, G172, K173, and T174. The domain IV, binds dsDNA stretch occupies residues 343-462 (NFTGRPITID…YANLIRTLSS (120 aa)).

It belongs to the DnaA family. As to quaternary structure, oligomerizes as a right-handed, spiral filament on DNA at oriC.

It is found in the cytoplasm. In terms of biological role, plays an essential role in the initiation and regulation of chromosomal replication. ATP-DnaA binds to the origin of replication (oriC) to initiate formation of the DNA replication initiation complex once per cell cycle. Binds the DnaA box (a 9 base pair repeat at the origin) and separates the double-stranded (ds)DNA. Forms a right-handed helical filament on oriC DNA; dsDNA binds to the exterior of the filament while single-stranded (ss)DNA is stabiized in the filament's interior. The ATP-DnaA-oriC complex binds and stabilizes one strand of the AT-rich DNA unwinding element (DUE), permitting loading of DNA polymerase. After initiation quickly degrades to an ADP-DnaA complex that is not apt for DNA replication. Binds acidic phospholipids. This Shewanella baltica (strain OS195) protein is Chromosomal replication initiator protein DnaA.